The following is a 460-amino-acid chain: Tyrosine phenol-lyase (460 aa).

Position 260 is an N6-(pyridoxal phosphate)lysine (K260).

Belongs to the beta-eliminating lyase family. As to quaternary structure, homotetramer. Requires pyridoxal 5'-phosphate as cofactor.

It carries out the reaction L-tyrosine + H2O = phenol + pyruvate + NH4(+). In Fusobacterium nucleatum subsp. nucleatum (strain ATCC 25586 / DSM 15643 / BCRC 10681 / CIP 101130 / JCM 8532 / KCTC 2640 / LMG 13131 / VPI 4355), this protein is Tyrosine phenol-lyase.